A 1394-amino-acid polypeptide reads, in one-letter code: ABC transporter patM (1394 aa).

The tract at residues M1 to A41 is disordered. The region spanning S98–S341 is the ABC transporter 1 domain. A run of 6 helical transmembrane segments spans residues S437–F457, L467–A487, I511–Y531, G546–F566, A579–P599, and V688–M708. Residues V727–N755 form a disordered region. The span at E737 to N755 shows a compositional bias: polar residues. Residues D767 to S1013 form the ABC transporter 2 domain. G808–T815 lines the ATP pocket. The next 6 membrane-spanning stretches (helical) occupy residues G1131–L1151, L1177–V1197, F1219–L1239, A1245–S1265, I1280–I1300, and I1368–L1388.

The protein belongs to the ABC transporter superfamily. ABCG family. PDR (TC 3.A.1.205) subfamily.

Its subcellular location is the vacuole membrane. It localises to the cell membrane. The protein operates within mycotoxin biosynthesis; patulin biosynthesis. Functionally, ABC transporter; part of the gene cluster that mediates the biosynthesis of patulin, an acetate-derived tetraketide mycotoxin produced by several fungal species that shows antimicrobial properties against several bacteria. May be involved in the secretion of E-ascladiol to be converted to patulin by the secreted patulin synthase patE. This is ABC transporter patM from Penicillium expansum (Blue mold rot fungus).